The primary structure comprises 248 residues: Killer cell lectin-like receptor subfamily I member 2 (248 aa).

Topologically, residues 1–79 are cytoplasmic; sequence MHKKKHIKHG…GIDPWLTTWQ (79 aa). Positions 19-44 are disordered; sequence IGTKSPTFQEKQRPSKTDQRSTVWRE. Residues 28–44 show a composition bias toward basic and acidic residues; the sequence is EKQRPSKTDQRSTVWRE. The helical; Signal-anchor for type II membrane protein transmembrane segment at 80–100 threads the bilayer; sequence MITVILATLCIILVTKVGFLI. Over 101–248 the chain is Extracellular; that stretch reads PSLFSKGEKQ…KKTYICEFNI (148 aa). Intrachain disulfides connect cysteine 132–cysteine 145, cysteine 161–cysteine 244, and cysteine 223–cysteine 236. A C-type lectin domain is found at 139 to 245; the sequence is FGNNFYCVFR…CSAKKTYICE (107 aa). Residues asparagine 197, asparagine 214, and asparagine 220 are each glycosylated (N-linked (GlcNAc...) asparagine).

Heterodimer with KLRE1. Expressed in natural killer (NK) cells.

Its subcellular location is the cell membrane. Its function is as follows. Lectin-like receptor for natural killer (NK) cells. Heterodimer formation with KLRE1 mediates NK cell cytolytic activity. The sequence is that of Killer cell lectin-like receptor subfamily I member 2 from Mus musculus (Mouse).